Reading from the N-terminus, the 835-residue chain is Protein translocase subunit SecA (835 aa).

ATP is bound by residues Q85, 103-107, and D492; that span reads GEGKT. The tract at residues 788–807 is disordered; sequence VQGEAVHPSSDGEEAKKKPV. C819, C821, C830, and C831 together coordinate Zn(2+).

It belongs to the SecA family. Monomer and homodimer. Part of the essential Sec protein translocation apparatus which comprises SecA, SecYEG and auxiliary proteins SecDF. Other proteins may also be involved. Zn(2+) is required as a cofactor.

It is found in the cell membrane. The protein localises to the cytoplasm. The catalysed reaction is ATP + H2O + cellular proteinSide 1 = ADP + phosphate + cellular proteinSide 2.. Part of the Sec protein translocase complex. Interacts with the SecYEG preprotein conducting channel. Has a central role in coupling the hydrolysis of ATP to the transfer of proteins into and across the cell membrane, serving as an ATP-driven molecular motor driving the stepwise translocation of polypeptide chains across the membrane. This Bacillus cereus (strain B4264) protein is Protein translocase subunit SecA.